The primary structure comprises 351 residues: 3-dehydroquinate synthase (351 aa).

NAD(+) contacts are provided by residues 126 to 127, K138, and K147; that span reads TT. E180, H244, and H260 together coordinate Zn(2+).

The protein belongs to the sugar phosphate cyclases superfamily. Dehydroquinate synthase family. Requires Co(2+) as cofactor. Zn(2+) is required as a cofactor. The cofactor is NAD(+).

Its subcellular location is the cytoplasm. The enzyme catalyses 7-phospho-2-dehydro-3-deoxy-D-arabino-heptonate = 3-dehydroquinate + phosphate. The protein operates within metabolic intermediate biosynthesis; chorismate biosynthesis; chorismate from D-erythrose 4-phosphate and phosphoenolpyruvate: step 2/7. Catalyzes the conversion of 3-deoxy-D-arabino-heptulosonate 7-phosphate (DAHP) to dehydroquinate (DHQ). The chain is 3-dehydroquinate synthase from Exiguobacterium sp. (strain ATCC BAA-1283 / AT1b).